The primary structure comprises 224 residues: 7-cyano-7-deazaguanine synthase (224 aa).

Residue 10–20 participates in ATP binding; it reads LSGGLDSATVV. Residues Cys-189, Cys-199, Cys-202, and Cys-205 each coordinate Zn(2+).

Belongs to the QueC family. Zn(2+) is required as a cofactor.

It catalyses the reaction 7-carboxy-7-deazaguanine + NH4(+) + ATP = 7-cyano-7-deazaguanine + ADP + phosphate + H2O + H(+). The protein operates within purine metabolism; 7-cyano-7-deazaguanine biosynthesis. In terms of biological role, catalyzes the ATP-dependent conversion of 7-carboxy-7-deazaguanine (CDG) to 7-cyano-7-deazaguanine (preQ(0)). The chain is 7-cyano-7-deazaguanine synthase from Pseudomonas putida (strain W619).